The chain runs to 85 residues: Large ribosomal subunit protein bL27 (85 aa).

The disordered stretch occupies residues 1 to 22; that stretch reads MAHKKGQGSSRNGRDSPGQHRG.

The protein belongs to the bacterial ribosomal protein bL27 family.

This is Large ribosomal subunit protein bL27 from Anaeromyxobacter sp. (strain Fw109-5).